The sequence spans 744 residues: 3-isopropylmalate dehydratase (744 aa).

[4Fe-4S] cluster-binding residues include Cys341, Cys401, and Cys404.

This sequence belongs to the aconitase/IPM isomerase family. As to quaternary structure, monomer. Requires [4Fe-4S] cluster as cofactor.

It catalyses the reaction (2R,3S)-3-isopropylmalate = (2S)-2-isopropylmalate. It participates in amino-acid biosynthesis; L-leucine biosynthesis; L-leucine from 3-methyl-2-oxobutanoate: step 2/4. Its function is as follows. Catalyzes the isomerization between 2-isopropylmalate and 3-isopropylmalate, via the formation of 2-isopropylmaleate. In Phycomyces blakesleeanus (strain ATCC 8743b / DSM 1359 / FGSC 10004 / NBRC 33097 / NRRL 1555), this protein is 3-isopropylmalate dehydratase (leu1).